The chain runs to 420 residues: Glutamyl-tRNA reductase (420 aa).

Substrate is bound by residues 49–52 (TCNR), Ser-109, 114–116 (EPQ), and Gln-120. Cys-50 (nucleophile) is an active-site residue. 189–194 (GAGETI) lines the NADP(+) pocket.

Belongs to the glutamyl-tRNA reductase family. As to quaternary structure, homodimer.

The catalysed reaction is (S)-4-amino-5-oxopentanoate + tRNA(Glu) + NADP(+) = L-glutamyl-tRNA(Glu) + NADPH + H(+). It functions in the pathway porphyrin-containing compound metabolism; protoporphyrin-IX biosynthesis; 5-aminolevulinate from L-glutamyl-tRNA(Glu): step 1/2. Its function is as follows. Catalyzes the NADPH-dependent reduction of glutamyl-tRNA(Glu) to glutamate 1-semialdehyde (GSA). This is Glutamyl-tRNA reductase from Yersinia enterocolitica serotype O:8 / biotype 1B (strain NCTC 13174 / 8081).